Here is a 155-residue protein sequence, read N- to C-terminus: SsrA-binding protein (155 aa).

Belongs to the SmpB family.

It localises to the cytoplasm. In terms of biological role, required for rescue of stalled ribosomes mediated by trans-translation. Binds to transfer-messenger RNA (tmRNA), required for stable association of tmRNA with ribosomes. tmRNA and SmpB together mimic tRNA shape, replacing the anticodon stem-loop with SmpB. tmRNA is encoded by the ssrA gene; the 2 termini fold to resemble tRNA(Ala) and it encodes a 'tag peptide', a short internal open reading frame. During trans-translation Ala-aminoacylated tmRNA acts like a tRNA, entering the A-site of stalled ribosomes, displacing the stalled mRNA. The ribosome then switches to translate the ORF on the tmRNA; the nascent peptide is terminated with the 'tag peptide' encoded by the tmRNA and targeted for degradation. The ribosome is freed to recommence translation, which seems to be the essential function of trans-translation. This Bacillus cereus (strain ATCC 10987 / NRS 248) protein is SsrA-binding protein.